The primary structure comprises 365 residues: Histidinol-phosphate aminotransferase 2 (365 aa).

Lys-226 carries the N6-(pyridoxal phosphate)lysine modification.

This sequence belongs to the class-II pyridoxal-phosphate-dependent aminotransferase family. Histidinol-phosphate aminotransferase subfamily. Homodimer. Requires pyridoxal 5'-phosphate as cofactor.

The enzyme catalyses L-histidinol phosphate + 2-oxoglutarate = 3-(imidazol-4-yl)-2-oxopropyl phosphate + L-glutamate. It functions in the pathway amino-acid biosynthesis; L-histidine biosynthesis; L-histidine from 5-phospho-alpha-D-ribose 1-diphosphate: step 7/9. This Pasteurella multocida (strain Pm70) protein is Histidinol-phosphate aminotransferase 2 (hisC2).